The following is a 665-amino-acid chain: Phosphatidylinositol-3-phosphate phosphatase MTMR1 (665 aa).

An N-acetylmethionine modification is found at Met1. The segment covering 1 to 11 has biased composition (low complexity); it reads MDRPAAAAAAG. The interval 1 to 51 is disordered; the sequence is MDRPAAAAAAGCEGGGGPNPGPAGGRRPPRAAGGATAGSRQPSVETLDSPT. A compositionally biased stretch (gly residues) spans 12-24; the sequence is CEGGGGPNPGPAG. Residues 39 to 51 are compositionally biased toward polar residues; that stretch reads SRQPSVETLDSPT. Residues Ser43 and Ser49 each carry the phosphoserine modification. Positions 90–161 constitute a GRAM domain; it reads NKLAQMEEAP…GVISRVEKIG (72 aa). Residues 226 to 601 enclose the Myotubularin phosphatase domain; it reads GWKVYDPVSE…SHLELWVNYY (376 aa). A 1,2-diacyl-sn-glycero-3-phospho-(1D-myo-inositol-3-phosphate) is bound by residues Asn351, Asn376, and Ile377. Cys438 acts as the Phosphocysteine intermediate in catalysis. Residues Ser439, Asp440, Gly441, Trp442, Asp443, Arg444, and Arg484 each contribute to the a 1,2-diacyl-sn-glycero-3-phospho-(1D-myo-inositol-3-phosphate) site. Phosphate is bound at residue Ser439. Phosphate is bound by residues Gly441, Trp442, Asp443, and Arg444. Residues 608–665 form a required for dimerization region; the sequence is MRPQMPIHQNLKELLAVRAELQKRVEGLQREVATRAVSSSSERGSSPSHSATSVHTSV. Positions 642–665 are disordered; sequence RAVSSSSERGSSPSHSATSVHTSV. Residues 645–657 are compositionally biased toward low complexity; the sequence is SSSSERGSSPSHS.

It belongs to the protein-tyrosine phosphatase family. Non-receptor class myotubularin subfamily. In terms of assembly, homodimer.

Its subcellular location is the cell membrane. It localises to the cytoplasm. The enzyme catalyses a 1,2-diacyl-sn-glycero-3-phospho-(1D-myo-inositol-3-phosphate) + H2O = a 1,2-diacyl-sn-glycero-3-phospho-(1D-myo-inositol) + phosphate. It catalyses the reaction 1,2-dioctanoyl-sn-glycero-3-phospho-(1-D-myo-inositol-3-phosphate) + H2O = 1,2-dioctanoyl-sn-glycero-3-phospho-(1D-myo-inositol) + phosphate. It carries out the reaction a 1,2-diacyl-sn-glycero-3-phospho-(1D-myo-inositol-3,5-bisphosphate) + H2O = a 1,2-diacyl-sn-glycero-3-phospho-(1D-myo-inositol-5-phosphate) + phosphate. Lipid phosphatase that specifically dephosphorylates the D-3 position of phosphatidylinositol 3-phosphate, generating phosphatidylinositol. Could also dephosphorylate phosphatidylinositol 3,5-bisphosphate to produce phosphatidylinositol 5-phosphate. This is Phosphatidylinositol-3-phosphate phosphatase MTMR1 from Homo sapiens (Human).